A 466-amino-acid polypeptide reads, in one-letter code: Soluble pyridine nucleotide transhydrogenase (466 aa).

An FAD-binding site is contributed by 36-45; the sequence is ERYNNVGGGC.

Belongs to the class-I pyridine nucleotide-disulfide oxidoreductase family. FAD is required as a cofactor.

The protein resides in the cytoplasm. The catalysed reaction is NAD(+) + NADPH = NADH + NADP(+). Conversion of NADPH, generated by peripheral catabolic pathways, to NADH, which can enter the respiratory chain for energy generation. This chain is Soluble pyridine nucleotide transhydrogenase, found in Yersinia enterocolitica serotype O:8 / biotype 1B (strain NCTC 13174 / 8081).